The primary structure comprises 132 residues: Small ribosomal subunit protein bS6 (132 aa).

Residues 94–132 (DAVTEESQLAKNADEKRARKATTRRPDRDDSDDNDHSED) form a disordered region. The segment covering 122–132 (DDSDDNDHSED) has biased composition (acidic residues).

The protein belongs to the bacterial ribosomal protein bS6 family.

Binds together with bS18 to 16S ribosomal RNA. In Psychrobacter arcticus (strain DSM 17307 / VKM B-2377 / 273-4), this protein is Small ribosomal subunit protein bS6.